A 257-amino-acid polypeptide reads, in one-letter code: UPF0246 protein Mmc1_3117 (257 aa).

This sequence belongs to the UPF0246 family.

The chain is UPF0246 protein Mmc1_3117 from Magnetococcus marinus (strain ATCC BAA-1437 / JCM 17883 / MC-1).